The chain runs to 540 residues: Glucose-6-phosphate isomerase (540 aa).

Glutamate 351 (proton donor) is an active-site residue. Active-site residues include histidine 382 and lysine 506.

Belongs to the GPI family.

It is found in the cytoplasm. The enzyme catalyses alpha-D-glucose 6-phosphate = beta-D-fructose 6-phosphate. The protein operates within carbohydrate biosynthesis; gluconeogenesis. Its pathway is carbohydrate degradation; glycolysis; D-glyceraldehyde 3-phosphate and glycerone phosphate from D-glucose: step 2/4. Its function is as follows. Catalyzes the reversible isomerization of glucose-6-phosphate to fructose-6-phosphate. The chain is Glucose-6-phosphate isomerase from Corynebacterium glutamicum (strain ATCC 13032 / DSM 20300 / JCM 1318 / BCRC 11384 / CCUG 27702 / LMG 3730 / NBRC 12168 / NCIMB 10025 / NRRL B-2784 / 534).